The sequence spans 376 residues: MTAQHPSPSARFTGDANPYGGGDPYADYRTADFPFTQYANLADRQLGAGVIAANDEFFAQRENLLVAGRAEFDPEHFGHKGKIMDGWETRRRRGASAAHPWPTAEDHDWALVRLGAPGVVRGVVVDTAHFRGNYPQAVSVEGASVPGSPSPEELLAGDVKWMTLVPRTAVGGHAANGFEVSVEQRFTHLRVNQHPDGGIARLRVYGEAVPDPVWLAALGTFDVVALENGGRVEDASNLFYSPATNTIQPGRSRQMDDGWETRRRRDHGNDWIRYQLVARSEIRAIEIDTAYLKGNSAGWAAVSVKDGESGEWTEILPRTRLQPDTNHRFTLAAPVAGTHARVDIFPDGGISRLRLFGSLTEEGAARLTARYQELGG.

The protein belongs to the allantoicase family.

The enzyme catalyses allantoate + H2O = (S)-ureidoglycolate + urea. Its pathway is nitrogen metabolism; (S)-allantoin degradation; (S)-ureidoglycolate from allantoate (aminidohydrolase route): step 1/1. This Streptomyces avermitilis (strain ATCC 31267 / DSM 46492 / JCM 5070 / NBRC 14893 / NCIMB 12804 / NRRL 8165 / MA-4680) protein is Probable allantoicase.